A 734-amino-acid chain; its full sequence is Photosystem I P700 chlorophyll a apoprotein A2 (734 aa).

The next 8 membrane-spanning stretches (helical) occupy residues 46–69, 135–158, 175–199, 273–291, 330–353, 369–395, 417–439, and 517–535; these read IFAS…FHVA, LYTG…LHLQ, LNHH…HVAI, IAHH…GHMY, LHFQ…QHMY, AALY…IFFI, AIIS…LYVH, and FLVH…SIPV. Cys559 and Cys568 together coordinate [4Fe-4S] cluster. Helical transmembrane passes span 575-596 and 643-665; these read AFYL…YWHW and LSVW…MFLI. Residues His654, Met662, and Tyr670 each coordinate chlorophyll a. Trp671 lines the phylloquinone pocket. The chain crosses the membrane as a helical span at residues 707 to 727; the sequence is LVGLAHFSVGYIFTYAAFLIA.

The protein belongs to the PsaA/PsaB family. The PsaA/B heterodimer binds the P700 chlorophyll special pair and subsequent electron acceptors. PSI consists of a core antenna complex that captures photons, and an electron transfer chain that converts photonic excitation into a charge separation. The eukaryotic PSI reaction center is composed of at least 11 subunits. P700 is a chlorophyll a/chlorophyll a' dimer, A0 is one or more chlorophyll a, A1 is one or both phylloquinones and FX is a shared 4Fe-4S iron-sulfur center. serves as cofactor.

Its subcellular location is the plastid. The protein resides in the chloroplast thylakoid membrane. It catalyses the reaction reduced [plastocyanin] + hnu + oxidized [2Fe-2S]-[ferredoxin] = oxidized [plastocyanin] + reduced [2Fe-2S]-[ferredoxin]. In terms of biological role, psaA and PsaB bind P700, the primary electron donor of photosystem I (PSI), as well as the electron acceptors A0, A1 and FX. PSI is a plastocyanin-ferredoxin oxidoreductase, converting photonic excitation into a charge separation, which transfers an electron from the donor P700 chlorophyll pair to the spectroscopically characterized acceptors A0, A1, FX, FA and FB in turn. Oxidized P700 is reduced on the lumenal side of the thylakoid membrane by plastocyanin. The chain is Photosystem I P700 chlorophyll a apoprotein A2 from Angiopteris evecta (Mule's foot fern).